The sequence spans 246 residues: Bidirectional sugar transporter SWEET3a (246 aa).

At 1–6 (MFPDIR) the chain is on the extracellular side. A helical membrane pass occupies residues 7-27 (FIVGIIGSVACMLLYSAPILT). A MtN3/slv 1 domain is found at 7-96 (FIVGIIGSVA…ISIYVWFAPR (90 aa)). Over 28–42 (FKRVIKKASVEEFSC) the chain is Cytoplasmic. The helical transmembrane segment at 43 to 63 (IPYILALFSCLTYSWYGFPVV) threads the bilayer. The Extracellular portion of the chain corresponds to 64–74 (SYGWENMTVCS). Asparagine 69 is a glycosylation site (N-linked (GlcNAc...) asparagine). The chain crosses the membrane as a helical span at residues 75–95 (ISSLGVLFEGTFISIYVWFAP). The Cytoplasmic portion of the chain corresponds to 96–101 (RGKKKQ). Residues 102–122 (VMLMASLILAVFCMTVFFSSF) form a helical membrane-spanning segment. Over 123–131 (SIHNHHIRK) the chain is Extracellular. A helical membrane pass occupies residues 132–152 (VFVGSVGLVSSISMYGSPLVA). Residues 133 to 217 (FVGSVGLVSS…VVYCIYSKCK (85 aa)) form the MtN3/slv 2 domain. Over 153 to 166 (MKQVIRTKSVEFMP) the chain is Cytoplasmic. Residues 167–187 (FYLSLFTLFTSLTWMAYGVIG) form a helical membrane-spanning segment. The Extracellular portion of the chain corresponds to 188–191 (RDPF). Residues 192 to 212 (IATPNCIGSIMGILQLVVYCI) traverse the membrane as a helical segment. The Cytoplasmic segment spans residues 213-246 (YSKCKEAPKVLHDIEQANVVKIPTSHVDTKGHNP).

The protein belongs to the SWEET sugar transporter family. As to quaternary structure, forms homooligomers and/or heterooligomers.

It is found in the cell membrane. Its function is as follows. Mediates both low-affinity uptake and efflux of sugar across the plasma membrane. This Oryza sativa subsp. japonica (Rice) protein is Bidirectional sugar transporter SWEET3a (SWEET3A).